The following is a 617-amino-acid chain: Membrane protein insertase YidC (617 aa).

The helical transmembrane segment at 8-28 (MFVAIGLSLLVLLGWQYFVAG) threads the bilayer. The span at 36 to 49 (QIEAQNKAAQQQPP) shows a compositional bias: polar residues. The interval 36–91 (QIEAQNKAAQQQPPGVTPDGVPSPSPKEGGPAAPAPGTLPTAQGGPVSREAALARS) is disordered. Positions 61–81 (PKEGGPAAPAPGTLPTAQGGP) are enriched in low complexity. The next 4 membrane-spanning stretches (helical) occupy residues 387 to 407 (LFGN…LLFL), 461 to 481 (WPVL…FITI), 517 to 533 (FVHL…TMFV), and 549 to 569 (IFTF…AGLV).

It belongs to the OXA1/ALB3/YidC family. Type 1 subfamily. Interacts with the Sec translocase complex via SecD. Specifically interacts with transmembrane segments of nascent integral membrane proteins during membrane integration.

The protein localises to the cell inner membrane. In terms of biological role, required for the insertion and/or proper folding and/or complex formation of integral membrane proteins into the membrane. Involved in integration of membrane proteins that insert both dependently and independently of the Sec translocase complex, as well as at least some lipoproteins. Aids folding of multispanning membrane proteins. In Methylobacterium radiotolerans (strain ATCC 27329 / DSM 1819 / JCM 2831 / NBRC 15690 / NCIMB 10815 / 0-1), this protein is Membrane protein insertase YidC.